A 75-amino-acid chain; its full sequence is Protein RALF-like 9 (75 aa).

The N-terminal stretch at 1-28 (MGMSKSIKVILSLALVVFLALAATKVEA) is a signal peptide. 2 cysteine pairs are disulfide-bonded: cysteine 46/cysteine 54 and cysteine 66/cysteine 72.

This sequence belongs to the plant rapid alkalinization factor (RALF) family.

The protein localises to the secreted. Its function is as follows. Cell signaling peptide that may regulate plant stress, growth, and development. Mediates a rapid alkalinization of extracellular space by mediating a transient increase in the cytoplasmic Ca(2+) concentration leading to a calcium-dependent signaling events through a cell surface receptor and a concomitant activation of some intracellular mitogen-activated protein kinases. The chain is Protein RALF-like 9 (RALFL9) from Arabidopsis thaliana (Mouse-ear cress).